A 135-amino-acid polypeptide reads, in one-letter code: MHYTTLLLSTLLVGTALAQPTNPPAKTPKKAPKTQPYNPCKPQEVIDTKCMGPKDCLYPNPDSCTTYIQCVPLDEVGNAKPVVKPCPKGLQWNDNVGKKWCDYPNLSTCPVKTPQPKPKKGGVGGKKASVGHPGY.

Residues 1–18 (MHYTTLLLSTLLVGTALA) form the signal peptide. Residues 19 to 29 (QPTNPPAKTPK) constitute a propeptide that is removed on maturation. Residues 19–39 (QPTNPPAKTPKKAPKTQPYNP) form a disordered region. In terms of domain architecture, Chitin-binding type-2 spans 47–111 (DTKCMGPKDC…DYPNLSTCPV (65 aa)). Cysteine 86 and cysteine 101 form a disulfide bridge. The tract at residues 112-135 (KTPQPKPKKGGVGGKKASVGHPGY) is disordered.

Its function is as follows. This necrosis-inducing peptide induces a hypersensitive response on Cf-4 tomato genotypes. Race-specific elicitors are compounds which only induce defense responses in genotypes of host plants which are resistant to the pathogenic race that produces the elicitor, but not in susceptible genotypes. The polypeptide is Race-specific elicitor A4 (AVR4) (Passalora fulva (Tomato leaf mold)).